The primary structure comprises 231 residues: Dihydropteridine reductase (231 aa).

An NADP(+)-binding site is contributed by 6-30 (LVLGGSGALGAEVVKFFKSKSWNTI). Y138 functions as the Proton acceptor in the catalytic mechanism.

This sequence belongs to the short-chain dehydrogenases/reductases (SDR) family. In terms of assembly, homodimer.

It carries out the reaction 5,6,7,8-tetrahydropteridine + NAD(+) = 6,7-dihydropteridine + NADH + H(+). The catalysed reaction is 5,6,7,8-tetrahydropteridine + NADP(+) = 6,7-dihydropteridine + NADPH + H(+). In terms of biological role, the product of this enzyme, tetrahydrobiopterin (BH-4), is an essential cofactor for phenylalanine, tyrosine, and tryptophan hydroxylases. This is Dihydropteridine reductase (qdpr) from Dictyostelium discoideum (Social amoeba).